Reading from the N-terminus, the 277-residue chain is Sulfur carrier protein FdhD (277 aa).

The Cysteine persulfide intermediate role is filled by cysteine 121. Mo-bis(molybdopterin guanine dinucleotide) is bound at residue 260–265 (FCKPGR).

Belongs to the FdhD family.

Its subcellular location is the cytoplasm. Required for formate dehydrogenase (FDH) activity. Acts as a sulfur carrier protein that transfers sulfur from IscS to the molybdenum cofactor prior to its insertion into FDH. This is Sulfur carrier protein FdhD from Escherichia coli O8 (strain IAI1).